The sequence spans 607 residues: Large ribosomal subunit assembly factor BipA (607 aa).

Positions 3-198 constitute a tr-type G domain; that stretch reads EKLRNIAIIA…AIVDHVPAPD (196 aa). GTP-binding positions include 15 to 20 and 128 to 131; these read DHGKTT and NKVD.

Belongs to the TRAFAC class translation factor GTPase superfamily. Classic translation factor GTPase family. BipA subfamily. As to quaternary structure, monomer.

The protein localises to the cytoplasm. The catalysed reaction is GTP + H2O = GDP + phosphate + H(+). Its function is as follows. A 50S ribosomal subunit assembly protein with GTPase activity, required for 50S subunit assembly at low temperatures, may also play a role in translation. Binds GTP and analogs. Binds the 70S ribosome between the 30S and 50S subunits, in a similar position as ribosome-bound EF-G; it contacts a number of ribosomal proteins, both rRNAs and the A-site tRNA. The chain is Large ribosomal subunit assembly factor BipA from Shigella flexneri.